A 544-amino-acid chain; its full sequence is Chaperonin GroEL (544 aa).

ATP contacts are provided by residues 30 to 33, lysine 51, 87 to 91, glycine 415, and aspartate 496; these read TLGP and DGTTT.

The protein belongs to the chaperonin (HSP60) family. As to quaternary structure, forms a cylinder of 14 subunits composed of two heptameric rings stacked back-to-back. Interacts with the co-chaperonin GroES.

The protein resides in the cytoplasm. The catalysed reaction is ATP + H2O + a folded polypeptide = ADP + phosphate + an unfolded polypeptide.. In terms of biological role, together with its co-chaperonin GroES, plays an essential role in assisting protein folding. The GroEL-GroES system forms a nano-cage that allows encapsulation of the non-native substrate proteins and provides a physical environment optimized to promote and accelerate protein folding. In Granulibacter bethesdensis (strain ATCC BAA-1260 / CGDNIH1), this protein is Chaperonin GroEL.